We begin with the raw amino-acid sequence, 144 residues long: HTH-type transcriptional regulator BilQ (144 aa).

The HTH marR-type domain occupies M1–K134. The segment at residues Q48–Q71 is a DNA-binding region (H-T-H motif).

Functionally, transcription regulator that regulates expression of the bilirubin reductase operon (bilQ, bilR and bilS). The sequence is that of HTH-type transcriptional regulator BilQ from Clostridium symbiosum (strain WAL-14163).